The primary structure comprises 156 residues: Arginine repressor (156 aa).

The protein belongs to the ArgR family.

Its subcellular location is the cytoplasm. The protein operates within amino-acid biosynthesis; L-arginine biosynthesis [regulation]. Its function is as follows. Regulates arginine biosynthesis genes. The protein is Arginine repressor of Klebsiella pneumoniae (strain 342).